The sequence spans 86 residues: Venom metalloproteinase (86 aa).

A Ca(2+)-binding site is contributed by Asp7. A Zn(2+)-binding site is contributed by His67. The active site involves Glu68. His71 and His77 together coordinate Zn(2+).

It belongs to the venom metalloproteinase (M12B) family. It depends on Zn(2+) as a cofactor. As to expression, expressed by the venom gland.

Its subcellular location is the secreted. In Tityus serrulatus (Brazilian scorpion), this protein is Venom metalloproteinase.